A 143-amino-acid chain; its full sequence is D-aminoacyl-tRNA deacylase (143 aa).

The Gly-cisPro motif, important for rejection of L-amino acids signature appears at 135-136; that stretch reads GP.

The protein belongs to the DTD family. Homodimer.

The protein resides in the cytoplasm. The enzyme catalyses glycyl-tRNA(Ala) + H2O = tRNA(Ala) + glycine + H(+). The catalysed reaction is a D-aminoacyl-tRNA + H2O = a tRNA + a D-alpha-amino acid + H(+). Its function is as follows. An aminoacyl-tRNA editing enzyme that deacylates mischarged D-aminoacyl-tRNAs. Also deacylates mischarged glycyl-tRNA(Ala), protecting cells against glycine mischarging by AlaRS. Acts via tRNA-based rather than protein-based catalysis; rejects L-amino acids rather than detecting D-amino acids in the active site. By recycling D-aminoacyl-tRNA to D-amino acids and free tRNA molecules, this enzyme counteracts the toxicity associated with the formation of D-aminoacyl-tRNA entities in vivo and helps enforce protein L-homochirality. This Nocardia farcinica (strain IFM 10152) protein is D-aminoacyl-tRNA deacylase.